The following is a 535-amino-acid chain: Suppressor of cytokine signaling 6 (535 aa).

Basic residues predominate over residues 80 to 89; it reads RLSAKQKSKG. The disordered stretch occupies residues 80 to 105; sequence RLSAKQKSKGKAGTPSGSSADEDTFS. One can recognise an SH2 domain in the interval 384 to 491; the sequence is WYWGPITRWE…TYPVRLTNPV (108 aa). In terms of domain architecture, SOCS box spans 486 to 535; the sequence is RLTNPVSRFMQVRSLQYLCRFVIRQYTRIDLIQKLPLPNKMKDYLQEKHY.

Interacts with RBCK1. Interacts with phosphorylated IRS4. Interacts with PIM3. Interacts with KIT (phosphorylated).

The protein operates within protein modification; protein ubiquitination. In terms of biological role, SOCS family proteins form part of a classical negative feedback system that regulates cytokine signal transduction. May be a substrate recognition component of a SCF-like ECS (Elongin BC-CUL2/5-SOCS-box protein) E3 ubiquitin-protein ligase complex which mediates the ubiquitination and subsequent proteasomal degradation of target proteins. Regulates KIT degradation by ubiquitination of the tyrosine-phosphorylated receptor. This is Suppressor of cytokine signaling 6 (SOCS6) from Homo sapiens (Human).